A 416-amino-acid polypeptide reads, in one-letter code: Tumor necrosis factor receptor superfamily member 16 (416 aa).

The first 19 residues, 1–19, serve as a signal peptide directing secretion; it reads MAGFVPLLLLLLPAGPTWG. TNFR-Cys repeat units lie at residues 23–57, 58–99, 100–138, and 140–180; these read KCLT…TVCE, PCLD…DAVC, RCAY…DTVC, and ECPE…DAEC. Cystine bridges form between C24-C35, C36-C49, C39-C56, C59-C75, C78-C91, C81-C99, C101-C114, C117-C130, C120-C138, C141-C156, C159-C172, and C162-C180. Residues 29–239 lie on the Extracellular side of the membrane; sequence YTTSGECCKA…PVVSRGTADN (211 aa). An N-linked (GlcNAc...) asparagine glycan is attached at N52. Residues 240-261 traverse the membrane as a helical segment; that stretch reads LIPVYCSILAAVVVGLVAYIAF. Topologically, residues 262–416 are cytoplasmic; the sequence is KRWNSCKQNK…YSESTATSPV (155 aa). Composition is skewed to polar residues over residues 270 to 284 and 294 to 315; these read NKQG…QTPS and SGIS…STQG. The interval 270 to 328 is disordered; it reads NKQGANNRPVNQTPSPEGEKLHSDSGISVDSQSLHDQQPPNQSTQGPAPKGDGSLYASL. One can recognise a Death domain in the interval 333-410; the sequence is QEEVEKLLSS…DIAESLYSES (78 aa).

Homodimer; disulfide-linked. Heterodimer with SORCS2. The extracellular domains of the heterodimer bind NGF. Post-translationally, N- and O-glycosylated. Phosphorylated on serine residues. Detected in embryonic dorsal root ganglion and retina.

The protein resides in the cell membrane. It is found in the perikaryon. It localises to the cell projection. Its subcellular location is the growth cone. The protein localises to the dendritic spine. In terms of biological role, low affinity receptor which can bind to NGF, BDNF, NTF3, and NTF4. Forms a heterodimeric receptor with SORCS2 that binds the precursor forms of NGF, BDNF and NTF3 with high affinity, and has much lower affinity for mature NGF and BDNF. Plays an important role in differentiation and survival of specific neuronal populations during development. Can mediate cell survival as well as cell death of neural cells. Plays a role in the inactivation of RHOA. Necessary for the circadian oscillation of clock genes in the suprachiasmatic nucleus (SCmgetaN) of the brain and in liver and of the genes involved in glucose and lipid metabolism in the liver. This is Tumor necrosis factor receptor superfamily member 16 (NGFR) from Gallus gallus (Chicken).